A 165-amino-acid polypeptide reads, in one-letter code: Transcription antitermination protein NusB (165 aa).

The segment at 1-20 is disordered; that stretch reads MSDVENGGEPRQPSVKPANQ.

Belongs to the NusB family.

In terms of biological role, involved in transcription antitermination. Required for transcription of ribosomal RNA (rRNA) genes. Binds specifically to the boxA antiterminator sequence of the ribosomal RNA (rrn) operons. The sequence is that of Transcription antitermination protein NusB from Agrobacterium fabrum (strain C58 / ATCC 33970) (Agrobacterium tumefaciens (strain C58)).